Here is a 493-residue protein sequence, read N- to C-terminus: Galactose-1-phosphate uridylyltransferase (493 aa).

Belongs to the galactose-1-phosphate uridylyltransferase type 2 family.

Its subcellular location is the cytoplasm. It catalyses the reaction alpha-D-galactose 1-phosphate + UDP-alpha-D-glucose = alpha-D-glucose 1-phosphate + UDP-alpha-D-galactose. Its pathway is carbohydrate metabolism; galactose metabolism. In Lactococcus lactis subsp. cremoris (strain MG1363), this protein is Galactose-1-phosphate uridylyltransferase.